The following is a 353-amino-acid chain: Photosystem II D2 protein (353 aa).

Residue Thr2 is modified to N-acetylthreonine. Thr2 is subject to Phosphothreonine. Residues 41 to 61 (CAYFALGGWFTGTTFVTSWYT) traverse the membrane as a helical segment. His118 provides a ligand contact to chlorophyll a. The chain crosses the membrane as a helical span at residues 125–141 (GFMLRQFELARSVQLRP). Pheophytin a contacts are provided by Gln130 and Asn143. The helical transmembrane segment at 153-166 (VFVSVFLIYPLGQS) threads the bilayer. His198 serves as a coordination point for chlorophyll a. The helical transmembrane segment at 208 to 228 (AALLCAIHGATVENTLFEDGD) threads the bilayer. Positions 215 and 262 each coordinate a plastoquinone. His215 is a Fe cation binding site. Residue His269 participates in Fe cation binding. The chain crosses the membrane as a helical span at residues 279–295 (GLWMSALGVVGLALNLR).

Belongs to the reaction center PufL/M/PsbA/D family. PSII is composed of 1 copy each of membrane proteins PsbA, PsbB, PsbC, PsbD, PsbE, PsbF, PsbH, PsbI, PsbJ, PsbK, PsbL, PsbM, PsbT, PsbX, PsbY, PsbZ, Psb30/Ycf12, at least 3 peripheral proteins of the oxygen-evolving complex and a large number of cofactors. It forms dimeric complexes. The D1/D2 heterodimer binds P680, chlorophylls that are the primary electron donor of PSII, and subsequent electron acceptors. It shares a non-heme iron and each subunit binds pheophytin, quinone, additional chlorophylls, carotenoids and lipids. There is also a Cl(-1) ion associated with D1 and D2, which is required for oxygen evolution. The PSII complex binds additional chlorophylls, carotenoids and specific lipids. is required as a cofactor.

The protein localises to the plastid. It is found in the chloroplast thylakoid membrane. The enzyme catalyses 2 a plastoquinone + 4 hnu + 2 H2O = 2 a plastoquinol + O2. In terms of biological role, photosystem II (PSII) is a light-driven water:plastoquinone oxidoreductase that uses light energy to abstract electrons from H(2)O, generating O(2) and a proton gradient subsequently used for ATP formation. It consists of a core antenna complex that captures photons, and an electron transfer chain that converts photonic excitation into a charge separation. The D1/D2 (PsbA/PsbD) reaction center heterodimer binds P680, the primary electron donor of PSII as well as several subsequent electron acceptors. D2 is needed for assembly of a stable PSII complex. The protein is Photosystem II D2 protein of Phaseolus vulgaris (Kidney bean).